Here is a 146-residue protein sequence, read N- to C-terminus: Hemoglobin subunit beta-2 (146 aa).

The Globin domain maps to 2 to 146 (EWTDFERATI…VVSSLGRQYH (145 aa)). Heme b-binding residues include H63 and H92.

This sequence belongs to the globin family. Hb 2 is a heterotetramer of two alpha-2 and two beta-2 chains. Red blood cells.

In terms of biological role, involved in oxygen transport from gills to the various peripheral tissues. This is Hemoglobin subunit beta-2 (hbb2) from Gobionotothen gibberifrons (Humped rockcod).